A 234-amino-acid chain; its full sequence is DNA repair protein RecO (234 aa).

This sequence belongs to the RecO family.

Involved in DNA repair and RecF pathway recombination. This Halorhodospira halophila (strain DSM 244 / SL1) (Ectothiorhodospira halophila (strain DSM 244 / SL1)) protein is DNA repair protein RecO.